The following is a 564-amino-acid chain: Dihydroxy-acid dehydratase (564 aa).

Cys50 lines the [2Fe-2S] cluster pocket. Asp82 is a binding site for Mg(2+). [2Fe-2S] cluster is bound at residue Cys123. 2 residues coordinate Mg(2+): Asp124 and Lys125. At Lys125 the chain carries N6-carboxylysine. Position 195 (Cys195) interacts with [2Fe-2S] cluster. Mg(2+) is bound at residue Glu447. The active-site Proton acceptor is Ser473.

This sequence belongs to the IlvD/Edd family. In terms of assembly, homodimer. It depends on [2Fe-2S] cluster as a cofactor. Mg(2+) is required as a cofactor.

The enzyme catalyses (2R)-2,3-dihydroxy-3-methylbutanoate = 3-methyl-2-oxobutanoate + H2O. It carries out the reaction (2R,3R)-2,3-dihydroxy-3-methylpentanoate = (S)-3-methyl-2-oxopentanoate + H2O. The protein operates within amino-acid biosynthesis; L-isoleucine biosynthesis; L-isoleucine from 2-oxobutanoate: step 3/4. It functions in the pathway amino-acid biosynthesis; L-valine biosynthesis; L-valine from pyruvate: step 3/4. Its function is as follows. Functions in the biosynthesis of branched-chain amino acids. Catalyzes the dehydration of (2R,3R)-2,3-dihydroxy-3-methylpentanoate (2,3-dihydroxy-3-methylvalerate) into 2-oxo-3-methylpentanoate (2-oxo-3-methylvalerate) and of (2R)-2,3-dihydroxy-3-methylbutanoate (2,3-dihydroxyisovalerate) into 2-oxo-3-methylbutanoate (2-oxoisovalerate), the penultimate precursor to L-isoleucine and L-valine, respectively. The chain is Dihydroxy-acid dehydratase from Chloroflexus aggregans (strain MD-66 / DSM 9485).